The chain runs to 79 residues: Exodeoxyribonuclease 7 small subunit (79 aa).

This sequence belongs to the XseB family. As to quaternary structure, heterooligomer composed of large and small subunits.

Its subcellular location is the cytoplasm. It catalyses the reaction Exonucleolytic cleavage in either 5'- to 3'- or 3'- to 5'-direction to yield nucleoside 5'-phosphates.. Bidirectionally degrades single-stranded DNA into large acid-insoluble oligonucleotides, which are then degraded further into small acid-soluble oligonucleotides. This chain is Exodeoxyribonuclease 7 small subunit, found in Geobacillus kaustophilus (strain HTA426).